A 407-amino-acid chain; its full sequence is Serine/threonine transporter SstT (407 aa).

Transmembrane regions (helical) follow at residues 12–32 (GNLI…GISS), 42–62 (LGIL…FILI), 81–101 (IIIL…LANF), 141–161 (ALSS…GIAL), 179–199 (VLKI…GLVA), 218–238 (ILLV…IVFF), 245–267 (FPLI…SSAA), 288–308 (ISIP…IAIL), and 330–350 (IIAT…LLLI).

It belongs to the dicarboxylate/amino acid:cation symporter (DAACS) (TC 2.A.23) family.

Its subcellular location is the cell inner membrane. The enzyme catalyses L-serine(in) + Na(+)(in) = L-serine(out) + Na(+)(out). It catalyses the reaction L-threonine(in) + Na(+)(in) = L-threonine(out) + Na(+)(out). Its function is as follows. Involved in the import of serine and threonine into the cell, with the concomitant import of sodium (symport system). The polypeptide is Serine/threonine transporter SstT (Campylobacter jejuni subsp. jejuni serotype O:2 (strain ATCC 700819 / NCTC 11168)).